Consider the following 764-residue polypeptide: Thyrotropin receptor (764 aa).

Residues 1–21 form the signal peptide; sequence MSLTPLLQLALLLALPRSLRG. Residues 22-413 lie on the Extracellular side of the membrane; it reads KGCPSPPCEC…EFNPCEDIMG (392 aa). Cysteine 31 and cysteine 41 are joined by a disulfide. 2 N-linked (GlcNAc...) asparagine glycosylation sites follow: asparagine 77 and asparagine 99. LRR repeat units lie at residues 125-150, 151-174, 176-199, 201-223, 225-248, and 250-271; these read LPLL…VYST, DVFF…AFQG, CNET…AFNG, KLDA…AFGG, FSGP…GLEH, and KELI…SFLH. Residues asparagine 177 and asparagine 198 are each glycosylated (N-linked (GlcNAc...) asparagine). An N-linked (GlcNAc...) asparagine glycan is attached at asparagine 302. Tyrosine 385 is modified (sulfotyrosine). The helical transmembrane segment at 414–441 threads the bilayer; sequence YRFLRIVVWFVSLLALLGNVFVLVILLT. Residues 442-450 are Cytoplasmic-facing; that stretch reads SHYKLTVPR. A helical transmembrane segment spans residues 451–473; that stretch reads FLMCNLAFADFCMGMYLLLIASV. Over 474–494 the chain is Extracellular; sequence DLYTQSEYYNHAIDWQTGPGC. An intrachain disulfide couples cysteine 494 to cysteine 569. Residues 495–517 traverse the membrane as a helical segment; it reads NTAGFFTVFASELSVYTLTVITL. The Cytoplasmic portion of the chain corresponds to 518-537; that stretch reads ERWYAITFAMRLDRKIRLRH. A helical transmembrane segment spans residues 538–560; that stretch reads AYAIMAGGWVCCFLLALLPLVGI. The Extracellular portion of the chain corresponds to 561-580; that stretch reads SSYAKVSICLPMDTETPLAL. A helical transmembrane segment spans residues 581-602; sequence AYIILVLLLNIVAFTIVCSCYV. Residues 603–625 lie on the Cytoplasmic side of the membrane; sequence KIYITVRNPQYNPGDKDTKIAKR. Residues 626–649 form a helical membrane-spanning segment; that stretch reads MAVLIFTDFMCMAPISFYALSALM. The Extracellular segment spans residues 650–660; it reads NKPLITVTNSK. The helical transmembrane segment at 661-682 threads the bilayer; it reads ILLVLFYPLNSCANPFLYAIFT. The Cytoplasmic portion of the chain corresponds to 683 to 764; that stretch reads KAFQRDVFIL…ISKEYKQPVL (82 aa). A PDZ-binding motif is present at residues 762-764; the sequence is PVL.

The protein belongs to the G-protein coupled receptor 1 family. FSH/LSH/TSH subfamily. In terms of assembly, interacts with heterodimer GPHA2:GPHB5; this interaction stimulates cAMP production. Interacts (via the PDZ-binding motif) with SCRIB; regulates TSHR trafficking and function. Glycosylated. Post-translationally, sulfated. Sulfation on Tyr-385 plays a role in thyrotropin receptor binding and activation. Expressed in thyroide cells (at protein level).

The protein resides in the cell membrane. It is found in the basolateral cell membrane. Receptor for the thyroid-stimulating hormone (TSH) or thyrotropin. Also acts as a receptor for the heterodimeric glycoprotein hormone (GPHA2:GPHB5) or thyrostimulin. The activity of this receptor is mediated by G proteins which activate adenylate cyclase. Plays a central role in controlling thyroid cell metabolism. In Sus scrofa (Pig), this protein is Thyrotropin receptor (TSHR).